Here is a 364-residue protein sequence, read N- to C-terminus: MKKDYYEILGLSKGASKDEIKKAYRKIAIKYHPDRNQGNEEAASIFKEATQAYEILIDDNKKAKYDRFGHSAFEGGGFEGFSGGFSGFSDIFEDFGDIFDSFFTGNKGQERNRKHAKGEDLGYNIEISLENAYFGYKNNINITRQMLCDSCLGKKSEKGTSPSICNMCNGSGRVVQGGGFFRVTTTCSKCYGEGKIISNPCKSCKGKGSLTKQETIQLNIPPGIDNNQQIKMKGKGNVNPDNQEYGDLYVKILIRSHKVFKRNGKDLYAMLPISFTQAALGKEVKIKTIASKEIKIHIPKGINNEEQILIKNAGMPILQTEKFGNLILITKIKTPKNLNSNAIKLFENLGKELKDGDEIDLLKA.

Positions 4–69 (DYYEILGLSK…NKKAKYDRFG (66 aa)) constitute a J domain. Residues 135-213 (GYKNNINITR…CKGKGSLTKQ (79 aa)) form a CR-type zinc finger. Zn(2+) contacts are provided by Cys-148, Cys-151, Cys-165, Cys-168, Cys-187, Cys-190, Cys-201, and Cys-204. 4 CXXCXGXG motif repeats span residues 148-155 (CDSCLGKK), 165-172 (CNMCNGSG), 187-194 (CSKCYGEG), and 201-208 (CKSCKGKG).

It belongs to the DnaJ family. As to quaternary structure, homodimer. The cofactor is Zn(2+).

The protein resides in the cytoplasm. Participates actively in the response to hyperosmotic and heat shock by preventing the aggregation of stress-denatured proteins and by disaggregating proteins, also in an autonomous, DnaK-independent fashion. Unfolded proteins bind initially to DnaJ; upon interaction with the DnaJ-bound protein, DnaK hydrolyzes its bound ATP, resulting in the formation of a stable complex. GrpE releases ADP from DnaK; ATP binding to DnaK triggers the release of the substrate protein, thus completing the reaction cycle. Several rounds of ATP-dependent interactions between DnaJ, DnaK and GrpE are required for fully efficient folding. Also involved, together with DnaK and GrpE, in the DNA replication of plasmids through activation of initiation proteins. This chain is Chaperone protein DnaJ, found in Borreliella burgdorferi (strain ATCC 35210 / DSM 4680 / CIP 102532 / B31) (Borrelia burgdorferi).